Consider the following 429-residue polypeptide: Palmitoyltransferase ZDHHC23 (429 aa).

At 1-81 (MKPVKKKKTE…RIPWLRGAKK (81 aa)) the chain is on the cytoplasmic side. The helical transmembrane segment at 82–102 (VNISILPPLVLLPVLLRVASW) threads the bilayer. Residue histidine 103 is a topological domain, lumenal. Residues 104 to 124 (FLLGVVVLTSLPMLALWYYYL) form a helical membrane-spanning segment. At 125-130 (THRRKE) the chain is on the cytoplasmic side. The chain crosses the membrane as a helical span at residues 131 to 151 (QTLFFLSLGLFSLGYMYYVFL). At 152–159 (QEVVPQGH) the chain is on the lumenal side. The helical transmembrane segment at 160–180 (VGPAQLALLTCGLFLILVALY) threads the bilayer. Topologically, residues 181–296 (RAKKNPGYLS…NSCVGESNHQ (116 aa)) are cytoplasmic. The tract at residues 212–247 (QEKTKGFPGTDTSGSLNNRTLKDDAKGSSRVGLDSP) is disordered. Positions 221-230 (TDTSGSLNNR) are enriched in polar residues. Residues 253–303 (DWCAKCQLVRPARAWHCRICGICVRRMDHHCVWINSCVGESNHQAFILALS) form the DHHC domain. Cysteine 283 functions as the S-palmitoyl cysteine intermediate in the catalytic mechanism. The helical transmembrane segment at 297–317 (AFILALSIFLLTSVYGISLTL) threads the bilayer. Residues 318–347 (NTICRDRSLFTALFYCPGVYANYSSALSFT) are Lumenal-facing. A helical transmembrane segment spans residues 348–368 (CVWYSVIITAGMAYIFLIQLI). At 369–429 (NISYNVTERE…TVHTPAEDIV (61 aa)) the chain is on the cytoplasmic side. The interaction with NOS1 stretch occupies residues 426–429 (EDIV).

This sequence belongs to the DHHC palmitoyltransferase family. As to quaternary structure, interacts with NOS1. In terms of tissue distribution, expressed in the brain (at protein level), with highest levels in olfactory bulb, piriform cortex and hippocampus.

The protein resides in the golgi apparatus membrane. Its subcellular location is the golgi apparatus. It localises to the trans-Golgi network membrane. It catalyses the reaction L-cysteinyl-[protein] + hexadecanoyl-CoA = S-hexadecanoyl-L-cysteinyl-[protein] + CoA. Palmitoyltransferase that could catalyze the addition of palmitate onto various protein substrates and be involved in a variety of cellular processes. Palmitoyltransferase that mediates palmitoylation of KCNMA1, regulating localization of KCNMA1 to the plasma membrane. May be involved in NOS1 regulation and targeting to the synaptic membrane. The chain is Palmitoyltransferase ZDHHC23 from Rattus norvegicus (Rat).